A 741-amino-acid polypeptide reads, in one-letter code: Lamin-B receptor (741 aa).

The tract at residues 29–126 (RLRRPRRTED…TGSGSGSSLP (98 aa)) is disordered. Low complexity-rich tracts occupy residues 57–84 (TRRTGSVTAAGATATATATAGPATRTRA) and 109–126 (PRSSVGPLTGSGSGSSLP). At Ser111 the chain carries Phosphoserine. Thr135 is subject to Phosphothreonine. Ser144 bears the Phosphoserine mark. Positions 160–184 (TNTSSGAPNKAFNTSSVNSGNSFSR) are enriched in polar residues. The segment at 160–194 (TNTSSGAPNKAFNTSSVNSGNSFSRTTTSSTTTTT) is disordered. Over residues 185-194 (TTTSSTTTTT) the composition is skewed to low complexity. Phosphoserine occurs at positions 223 and 225. The segment covering 231 to 240 (LAGTPVTNTE) has biased composition (polar residues). A disordered region spans residues 231–277 (LAGTPVTNTEEGSRYSRSVSRSVYDDEKSSKRSYSTGEEDIDEEDEL). Phosphothreonine is present on residues Thr234 and Thr237. Residues Ser243, Ser246, Ser248, Ser250, and Ser263 each carry the phosphoserine modification. Phosphothreonine is present on Thr266. A compositionally biased stretch (acidic residues) spans 267 to 277 (GEEDIDEEDEL). Phosphoserine is present on Ser284. At Thr288 the chain carries Phosphothreonine. Ser291 is modified (phosphoserine). A Phosphothreonine modification is found at Thr293. Residue Ser298 is modified to Phosphoserine. The next 8 membrane-spanning stretches (helical) occupy residues 308–328 (FGGWLGAFLFLLLLPTAVYYL), 363–383 (VVGAFAAYQVVVFLLVALLPG), 402–422 (LTLLIASGVAEYLKYPVVTFV), 429–449 (FCIFGLVGAFVAAAWSYWLVD), 497–517 (LSLVTTLIYATCYIYQTLVWP), 543–563 (PATLFSASCLLFYVLDAIIFE), 577–599 (YGCLLLLRYAATPYLLTAVTKYF), and 604–624 (VPISCWYAPLAVAALLSLGLL). Residues Ser640 and Ser642 each carry the phosphoserine modification. A helical membrane pass occupies residues 687 to 707 (MALRPAWPPVLGLSLIILLLL).

Belongs to the ERG4/ERG24 family. Interacts directly with LAM.

Its subcellular location is the nucleus inner membrane. Its function is as follows. Anchors the lamina and the heterochromatin to the inner nuclear membrane. The sequence is that of Lamin-B receptor from Drosophila melanogaster (Fruit fly).